The following is a 511-amino-acid chain: Steroid 17-alpha-hydroxylase/17,20 lyase (511 aa).

Residue Cys-442 participates in heme binding.

Belongs to the cytochrome P450 family. Requires heme as cofactor.

Its subcellular location is the endoplasmic reticulum membrane. The protein localises to the microsome membrane. It carries out the reaction a C21-steroid + reduced [NADPH--hemoprotein reductase] + O2 = a 17alpha-hydroxy-C21-steroid + oxidized [NADPH--hemoprotein reductase] + H2O + H(+). The catalysed reaction is progesterone + reduced [NADPH--hemoprotein reductase] + O2 = 17alpha-hydroxyprogesterone + oxidized [NADPH--hemoprotein reductase] + H2O + H(+). The enzyme catalyses pregnenolone + reduced [NADPH--hemoprotein reductase] + O2 = 17alpha-hydroxypregnenolone + oxidized [NADPH--hemoprotein reductase] + H2O + H(+). It catalyses the reaction 17alpha-hydroxyprogesterone + reduced [NADPH--hemoprotein reductase] + O2 = androst-4-ene-3,17-dione + acetate + oxidized [NADPH--hemoprotein reductase] + H2O + 2 H(+). It carries out the reaction 17alpha-hydroxyprogesterone + reduced [NADPH--hemoprotein reductase] + O2 = 16alpha,17alpha-dihydroxyprogesterone + oxidized [NADPH--hemoprotein reductase] + H2O + H(+). The catalysed reaction is 16alpha,17alpha-dihydroxyprogesterone + reduced [NADPH--hemoprotein reductase] + O2 = 6beta,16alpha,17alpha-trihydroxyprogesterone + oxidized [NADPH--hemoprotein reductase] + H2O + H(+). The enzyme catalyses 17alpha-hydroxypregnenolone + reduced [NADPH--hemoprotein reductase] + O2 = 3beta-hydroxyandrost-5-en-17-one + acetate + oxidized [NADPH--hemoprotein reductase] + H2O + 2 H(+). It catalyses the reaction 16alpha,17alpha-dihydroxypregnenolone + reduced [NADPH--hemoprotein reductase] + O2 = 3beta,16alpha-dihydroxy-androst-5-en-17-one + acetate + oxidized [NADPH--hemoprotein reductase] + H2O + 2 H(+). It carries out the reaction 3beta-hydroxyandrost-5-en-17-one + reduced [NADPH--hemoprotein reductase] + O2 = 3beta,16alpha-dihydroxy-androst-5-en-17-one + oxidized [NADPH--hemoprotein reductase] + H2O + H(+). The catalysed reaction is androst-4-ene-3,17-dione + reduced [NADPH--hemoprotein reductase] + O2 = 16alpha-hydroxyandrost-4-ene-3,17-dione + oxidized [NADPH--hemoprotein reductase] + H2O + H(+). It participates in steroid hormone biosynthesis. Its pathway is steroid biosynthesis; glucocorticoid biosynthesis. Regulated predominantly by intracellular cAMP levels. The 17,20-lyase activity is stimulated by cytochrome b5, which acts as an allosteric effector increasing the Vmax of the lyase activity. A cytochrome P450 monooxygenase involved in corticoid and androgen biosynthesis. Catalyzes 17-alpha hydroxylation of C21 steroids, which is common for both pathways. A second oxidative step, required only for androgen synthesis, involves an acyl-carbon cleavage. The 17-alpha hydroxy intermediates, as part of adrenal glucocorticoids biosynthesis pathway, are precursors of cortisol. Hydroxylates steroid hormones, pregnenolone and progesterone to form 17-alpha hydroxy metabolites, followed by the cleavage of the C17-C20 bond to form C19 steroids, dehydroepiandrosterone (DHEA) and androstenedione. Has 16-alpha hydroxylase activity. Catalyzes 16-alpha hydroxylation of 17-alpha hydroxy pregnenolone, followed by the cleavage of the C17-C20 bond to form 16-alpha-hydroxy DHEA. Also 16-alpha hydroxylates androgens, relevant for estriol synthesis. Mechanistically, uses molecular oxygen inserting one oxygen atom into a substrate, and reducing the second into a water molecule, with two electrons provided by NADPH via cytochrome P450 reductase (CPR; NADPH-ferrihemoprotein reductase). This Mesocricetus auratus (Golden hamster) protein is Steroid 17-alpha-hydroxylase/17,20 lyase (CYP17A1).